Here is a 451-residue protein sequence, read N- to C-terminus: Speckle-type POZ protein homolog (451 aa).

Residues 51-75 (EVVSSGSGNSAHGRSISPSPSSASH) are disordered. Low complexity predominate over residues 60 to 75 (SAHGRSISPSPSSASH). In terms of domain architecture, MATH spans 95–225 (KFNYMWTINN…GDRLSIFCEV (131 aa)). Residues 265–338 (SDFTLVCKSD…MYTGQTKYIE (74 aa)) form the BTB domain.

The protein belongs to the Tdpoz family.

Its subcellular location is the nucleus. The protein resides in the nucleus speckle. It participates in protein modification; protein ubiquitination. Mediates ubiquitination and proteasomal degradation of target proteins, most likely in complex with cul-3. May promote the degradation of bromodomain-containing proteins such as bet-1. The protein is Speckle-type POZ protein homolog of Caenorhabditis elegans.